Here is a 169-residue protein sequence, read N- to C-terminus: Cell division inhibitor SulA (169 aa).

A ftsZ binding region spans residues alanine 106–tyrosine 112. Residues lysine 162–histidine 169 form a lon protease binding region.

The protein belongs to the SulA family. In terms of assembly, interacts with FtsZ. Post-translationally, is rapidly cleaved and degraded by the Lon protease once DNA damage is repaired.

In terms of biological role, component of the SOS system and an inhibitor of cell division. Accumulation of SulA causes rapid cessation of cell division and the appearance of long, non-septate filaments. In the presence of GTP, binds a polymerization-competent form of FtsZ in a 1:1 ratio, thus inhibiting FtsZ polymerization and therefore preventing it from participating in the assembly of the Z ring. This mechanism prevents the premature segregation of damaged DNA to daughter cells during cell division. In Salmonella choleraesuis (strain SC-B67), this protein is Cell division inhibitor SulA.